Consider the following 59-residue polypeptide: UPF0391 membrane protein lpl2443 (59 aa).

Transmembrane regions (helical) follow at residues 5–25 (ALIFFIIAIIAAAFGFGGIAV) and 30–50 (IAKILFFLFLVMFVIFLIMGL).

The protein belongs to the UPF0391 family.

Its subcellular location is the cell membrane. This Legionella pneumophila (strain Lens) protein is UPF0391 membrane protein lpl2443.